We begin with the raw amino-acid sequence, 1025 residues long: MKFFALFIYRPVATILLSVAITLCGILGFRMLPVAPLPQVDFPVIMVSASLPGASPETMASSVATPLERSLGRIAGVSEMTSSSSLGSTRIILQFDFDRDINGAARDVQAAINAAQSLLPSGMPSRPTYRKANPSDAPIMILTLTSDTYSQGKLYDFASTQLAPTISQIDGVGDVDVGGSSLPAVRVGLNPQALFNQGVSLDDVRTAISNANVRKPQGALEDGTHRWQIQTNDELKTAAEYQPLIIHYNNGGAVRLGDVATVTDSVQDVRNAGMTNAKPAILLMIRKLPEANIIQTVDSIRAKLPELQETIPAAIDLQIAQDRSPTIRASLEEVEQTLIISVALVILVVFLFLRSGRATIIPAVAVPVSLIGTFAAMYLCGFSLNNLSLMALTIATGFVVDDAIVVLENIARHLEAGMKPLQAALQGTREVGFTVLSMSLSLVAVFLPLLLMGGLPGRLLREFAVTLSVAIGISLLVSLTLTPMMCGWMLKASKPREQKRLRGFGRMLVALQQGYGKSLKWVLNHTRLVGVVLLGTIALNIWLYISIPKTFFPEQDTGVLMGGIQADQSISFQAMRGKLQDFMKIIRDDPAVDNVTGFTGGSRVNSGMMFITLKPRDERSETAQQIIDRLRVKLAKEPGANLFLMAVQDIRVGGRQSNASYQYTLLSDDLAALREWEPKIRKKLATLPELADVNSDQQDNGAEMNLVYDRDTMARLGIDVQAANSLLNNAFGQRQISTIYQPMNQYKVVMEVDPRYTQDISALEKMFVINNEGKAIPLSYFAKWQPANAPLSVNHQGLSAASTISFNLPTGKSLSDASAAIDRAMTQLGVPSTVRGSFAGTAQVFQETMNSQVILIIAAIATVYIVLGILYESYVHPLTILSTLPSAGVGALLALELFNAPFSLIALIGIMLLIGIVKKNAIMMVDFALEAQRHGNLTPQEAIFQACLLRFRPIMMTTLAALFGALPLVLSGGDGSELRQPLGITIVGGLVMSQLLTLYTTPVVYLFFDRLRLRFSRKPKQTVTE.

12 helical membrane passes run 3-23, 333-353, 360-380, 387-407, 431-451, 463-483, 528-548, 853-873, 875-895, 897-917, 953-973, and 984-1004; these read FFAL…AITL, EVEQ…FLFL, IIPA…MYLC, LSLM…IVVL, VGFT…PLLL, FAVT…TLTP, LVGV…ISIP, VILI…LYES, VHPL…LLAL, LFNA…IGIV, PIMM…LSGG, and ITIV…TPVV.

This sequence belongs to the resistance-nodulation-cell division (RND) (TC 2.A.6) family. MdtC subfamily. As to quaternary structure, part of a tripartite efflux system composed of MdtA, MdtB and MdtC. MdtC forms a heteromultimer with MdtB.

The protein localises to the cell inner membrane. The chain is Multidrug resistance protein MdtC from Shigella boydii serotype 4 (strain Sb227).